Here is a 479-residue protein sequence, read N- to C-terminus: MSHNLKQLFQQHNVKGLSINSKTVKDKDIFFAIKGQNTDGNDFIKDALSKGAVLVITDNKKNIVIDKVIYVKDVQAALYEAIEIFYPKKPKDLIAVTGTNGKSSVVSYIAQTYSLLGKKAASIGTIGVEIFGCVNLINDVPELTTLDYLSFRKIAHNLAENGIEYLVFEASSHGLDQARLREIKVNIACFTSFSQDHLDYHHTKENYLLAKLKLFINHLLPNGIAILNSDIEEIEFVKDYLHNHNIKFITVGTKGDLEITRLNGSLKGQNINFTFNNREYNFNTPIIGSFQASNLLIAVLSIHYIGFAFDDVIDSLVEVKAVKGRMERIDNTNIFVDYAHTPDALEKALTELKNIKLRDSKLSVVFGCGGNRDKAKRSLMGQIAAKRADTIIITDDNPRHEDPKLIRAEIISGIEKADYTEIANREEAIKYGINNLKQDDILLVAGKGHENYQIIGDKKLPFDDAEVVRKCVKVCHPVA.

S21 contacts UDP-N-acetyl-alpha-D-muramoyl-L-alanyl-D-glutamate. ATP is bound at residue 98–104 (GTNGKSS). Residues 144–145 (TT), S171, Q177, and R179 each bind UDP-N-acetyl-alpha-D-muramoyl-L-alanyl-D-glutamate. K211 carries the N6-carboxylysine modification. Meso-2,6-diaminopimelate contacts are provided by residues R372, 396–399 (DNPR), G446, and E450. A Meso-diaminopimelate recognition motif motif is present at residues 396-399 (DNPR).

The protein belongs to the MurCDEF family. MurE subfamily. Mg(2+) is required as a cofactor. In terms of processing, carboxylation is probably crucial for Mg(2+) binding and, consequently, for the gamma-phosphate positioning of ATP.

It localises to the cytoplasm. It catalyses the reaction UDP-N-acetyl-alpha-D-muramoyl-L-alanyl-D-glutamate + meso-2,6-diaminopimelate + ATP = UDP-N-acetyl-alpha-D-muramoyl-L-alanyl-gamma-D-glutamyl-meso-2,6-diaminopimelate + ADP + phosphate + H(+). It functions in the pathway cell wall biogenesis; peptidoglycan biosynthesis. Functionally, catalyzes the addition of meso-diaminopimelic acid to the nucleotide precursor UDP-N-acetylmuramoyl-L-alanyl-D-glutamate (UMAG) in the biosynthesis of bacterial cell-wall peptidoglycan. The polypeptide is UDP-N-acetylmuramoyl-L-alanyl-D-glutamate--2,6-diaminopimelate ligase (Rickettsia conorii (strain ATCC VR-613 / Malish 7)).